Consider the following 287-residue polypeptide: Bifunctional protein FolD (287 aa).

NADP(+)-binding positions include 169–171 (GRS) and Ser194.

It belongs to the tetrahydrofolate dehydrogenase/cyclohydrolase family. In terms of assembly, homodimer.

It catalyses the reaction (6R)-5,10-methylene-5,6,7,8-tetrahydrofolate + NADP(+) = (6R)-5,10-methenyltetrahydrofolate + NADPH. The enzyme catalyses (6R)-5,10-methenyltetrahydrofolate + H2O = (6R)-10-formyltetrahydrofolate + H(+). Its pathway is one-carbon metabolism; tetrahydrofolate interconversion. Its function is as follows. Catalyzes the oxidation of 5,10-methylenetetrahydrofolate to 5,10-methenyltetrahydrofolate and then the hydrolysis of 5,10-methenyltetrahydrofolate to 10-formyltetrahydrofolate. The protein is Bifunctional protein FolD of Albidiferax ferrireducens (strain ATCC BAA-621 / DSM 15236 / T118) (Rhodoferax ferrireducens).